A 941-amino-acid chain; its full sequence is Bifunctional uridylyltransferase/uridylyl-removing enzyme (941 aa).

The tract at residues 1–372 (MAKHDLSDAT…RFAHRPRRIP (372 aa)) is uridylyltransferase. The segment at 373 to 728 (GTPEFIEDRG…VRTHSFHAIT (356 aa)) is uridylyl-removing. The 123-residue stretch at 489–611 (VDEHLIRSVG…VQSLDRLRML (123 aa)) folds into the HD domain. ACT domains are found at residues 729–810 (EITV…EVIA) and 840–919 (VIEI…LREQ). Residues 916 to 941 (LREQMPSGIIAPAATKSPAAEKKARV) form a disordered region.

This sequence belongs to the GlnD family. Requires Mg(2+) as cofactor.

It carries out the reaction [protein-PII]-L-tyrosine + UTP = [protein-PII]-uridylyl-L-tyrosine + diphosphate. It catalyses the reaction [protein-PII]-uridylyl-L-tyrosine + H2O = [protein-PII]-L-tyrosine + UMP + H(+). Uridylyltransferase (UTase) activity is inhibited by glutamine, while glutamine activates uridylyl-removing (UR) activity. Modifies, by uridylylation and deuridylylation, the PII regulatory proteins (GlnB and homologs), in response to the nitrogen status of the cell that GlnD senses through the glutamine level. Under low glutamine levels, catalyzes the conversion of the PII proteins and UTP to PII-UMP and PPi, while under higher glutamine levels, GlnD hydrolyzes PII-UMP to PII and UMP (deuridylylation). Thus, controls uridylylation state and activity of the PII proteins, and plays an important role in the regulation of nitrogen assimilation and metabolism. This chain is Bifunctional uridylyltransferase/uridylyl-removing enzyme, found in Allorhizobium ampelinum (strain ATCC BAA-846 / DSM 112012 / S4) (Agrobacterium vitis (strain S4)).